Here is a 555-residue protein sequence, read N- to C-terminus: Vacuolar fusion protein MON1 homolog A (555 aa).

Positions 1–12 are enriched in basic and acidic residues; that stretch reads MAADMQRKRSSE. The interval 1–87 is disordered; sequence MAADMQRKRS…RGPPPLPADM (87 aa). Phosphoserine occurs at positions 31 and 56. At Thr61 the chain carries Phosphothreonine. Ser91 carries the post-translational modification Phosphoserine. The disordered stretch occupies residues 114-147; the sequence is PGSSEDWLDPPGAVGRPATEPPREGTAEGDEEDA.

It belongs to the MON1/SAND family. In terms of assembly, interacts with CCZ1. Found in a complex with RMC1, CCZ1, MON1A and MON1B. The MON1A-CCZ1B complex interacts with RIMOC1. The MON1A-CCZ1B complex interacts with RAB7A and this interaction is enhanced in the presence of RIMOC1.

Its function is as follows. Plays an important role in membrane trafficking through the secretory apparatus. Not involved in endocytic trafficking to lysosomes. Acts in concert with CCZ1, as a guanine exchange factor (GEF) for RAB7, promotes the exchange of GDP to GTP, converting it from an inactive GDP-bound form into an active GTP-bound form. The sequence is that of Vacuolar fusion protein MON1 homolog A (MON1A) from Macaca fascicularis (Crab-eating macaque).